We begin with the raw amino-acid sequence, 453 residues long: Cysteine--tRNA ligase (453 aa).

Zn(2+) is bound at residue Cys30. The short motif at 32 to 42 is the 'HIGH' region element; it reads PTVYDRAHLGN. The Zn(2+) site is built by Cys212, His237, and Glu241. Residues 268–272 carry the 'KMSKS' region motif; sequence KMSKS. Lys271 provides a ligand contact to ATP.

The protein belongs to the class-I aminoacyl-tRNA synthetase family. In terms of assembly, monomer. The cofactor is Zn(2+).

Its subcellular location is the cytoplasm. The enzyme catalyses tRNA(Cys) + L-cysteine + ATP = L-cysteinyl-tRNA(Cys) + AMP + diphosphate. This is Cysteine--tRNA ligase from Jannaschia sp. (strain CCS1).